Reading from the N-terminus, the 400-residue chain is MGATGVLLCVVLHFLQMVTQSSEKFTVTGLQRPVLAPLGGNVELSCQLSPPQQAQHMEIRWFRNRYREPVYLYRNGKDLHGETISKYVERTELLKDDIGKGKVTLRIFKLTADDDGSYHCVFKVGEFYEEHITEIKVTATSSVMYILMQPPNIKGVMLECHSGGWFPQPHMEWRDNKGNIIPATSKAHSQDENKLFNMTMTLLIEASSHRSITCYLQNLLTHQEESISIVLSGELFSWKRVWIMILTTIGFMMIAFCMTYCVQQHLLYGTFSKGKCHWLKSTMIFMFSVIAVTGVMLILHLKQRVPVSDQHFELDTLWLEDISVILCVLIVFIIKLISFIYFRLEGDHQGWSLPPYLSATPTAAICRLAVPEYSRGHLQLDSEDDLAGMGPSPFFITPCF.

The signal sequence occupies residues 1–21 (MGATGVLLCVVLHFLQMVTQS). Residues 22–240 (SEKFTVTGLQ…LSGELFSWKR (219 aa)) lie on the Extracellular side of the membrane. An Ig-like V-type domain is found at 23–133 (EKFTVTGLQR…VGEFYEEHIT (111 aa)). 2 disulfide bridges follow: Cys46-Cys120 and Cys160-Cys214. Positions 139–225 (ATSSVMYILM…LQNLLTHQEE (87 aa)) constitute an Ig-like C1-type domain. An N-linked (GlcNAc...) asparagine glycan is attached at Asn197. The chain crosses the membrane as a helical span at residues 241-261 (VWIMILTTIGFMMIAFCMTYC). Topologically, residues 262–280 (VQQHLLYGTFSKGKCHWLK) are cytoplasmic. Residues 281–301 (STMIFMFSVIAVTGVMLILHL) form a helical membrane-spanning segment. Residues 302–321 (KQRVPVSDQHFELDTLWLED) lie on the Extracellular side of the membrane. Residues 322 to 342 (ISVILCVLIVFIIKLISFIYF) traverse the membrane as a helical segment. Over 343–400 (RLEGDHQGWSLPPYLSATPTAAICRLAVPEYSRGHLQLDSEDDLAGMGPSPFFITPCF) the chain is Cytoplasmic.

This sequence belongs to the SKINT family. Expressed in skin, thymus and mammary gland.

It localises to the membrane. Functionally, may act by engaging a cell surface molecule on immature T-cells in the embryonic thymus. This Mus musculus (Mouse) protein is Selection and upkeep of intraepithelial T-cells protein 2 (Skint2).